The chain runs to 163 residues: Protein MATERNALLY EXPRESSED GENE 5 (163 aa).

The 80-residue stretch at 38-117 (STLYIEGLPA…DDVNVSAPAE (80 aa)) folds into the RRM domain. 2 cysteine pairs are disulfide-bonded: C140-C162 and C143-C151.

It belongs to the MEG family. Ubiquitous.

This chain is Protein MATERNALLY EXPRESSED GENE 5 (MEG5), found in Zea mays (Maize).